We begin with the raw amino-acid sequence, 137 residues long: MGAHLTRRYLWDASVEPDPEKIPSFPPDLGFPERKERVMVATQQEMMDAQLTLQQRDYCAHYLIRLLKCKRDSFPNFLACKHEQHDWDYCEHLDYVKRMKEFERERRLLQRKKRRALKEARVAQGQGEGEVGPEVAL.

The N-myristoyl glycine moiety is linked to residue glycine 2. In terms of domain architecture, CHCH spans 56–98; it reads RDYCAHYLIRLLKCKRDSFPNFLACKHEQHDWDYCEHLDYVKR. The short motif at 59 to 69 is the Cx9C motif 1 element; sequence CAHYLIRLLKC. 2 disulfides stabilise this stretch: cysteine 59–cysteine 90 and cysteine 69–cysteine 80. Serine 73 is modified (phosphoserine). Positions 80–90 match the Cx9C motif 2 motif; it reads CKHEQHDWDYC.

Belongs to the complex I NDUFB7 subunit family. Complex I is composed of 45 different subunits.

The protein localises to the mitochondrion inner membrane. It is found in the mitochondrion intermembrane space. Its function is as follows. Accessory subunit of the mitochondrial membrane respiratory chain NADH dehydrogenase (Complex I), that is believed not to be involved in catalysis. Complex I functions in the transfer of electrons from NADH to the respiratory chain. The immediate electron acceptor for the enzyme is believed to be ubiquinone. In Mus musculus (Mouse), this protein is NADH dehydrogenase [ubiquinone] 1 beta subcomplex subunit 7 (Ndufb7).